The chain runs to 52 residues: MEKVQYLTRSAIRRASTIEMPQQARQKLQNLFINFCLILICLLLICIIVMLL.

Met1 is subject to N-acetylmethionine. The Cytoplasmic segment spans residues 1–31 (MEKVQYLTRSAIRRASTIEMPQQARQKLQNL). A Phosphoserine; by PKA and DMPK modification is found at Ser16. Positions 16-22 (STIEMPQ) are involved in HAX1 binding. Phosphothreonine; by CaMK2 is present on Thr17. Residues 32 to 52 (FINFCLILICLLLICIIVMLL) traverse the membrane as a helical segment. The S-palmitoyl cysteine moiety is linked to residue Cys36.

Belongs to the phospholamban family. Homopentamer. Can also form heterooligomers with other sarcoplasmic/endoplasmic reticulum calcium ATPase (SERCA) regulators ARLN, ERLN, SLN and STRIT1/DWORF. Monomer. Interacts with HAX1. Interacts as a monomer with ATP2A2; the interaction decreases ATP2A2 Ca(2+) affinity. Interacts with VMP1; VMP1 competes with PLN and SLN to prevent them from forming an inhibitory complex with ATP2A2. Interacts with S100A1 in a Ca(2+)-dependent manner. In terms of processing, phosphorylation by PKA abolishes the inhibition of ATP2A2-mediated calcium uptake. Phosphorylated at Thr-17 by CaMK2, and in response to beta-adrenergic stimulation. Phosphorylation by DMPK may stimulate sarcoplasmic reticulum calcium uptake in cardiomyocytes. Post-translationally, palmitoylated by ZDHHC16, promoting formation of the homopentamer. In elongated spermatids, proteolytically cleaved by SPPL2C which modulates intracellular Ca(2+) homeostasis. Heart muscle (at protein level).

The protein resides in the endoplasmic reticulum membrane. The protein localises to the sarcoplasmic reticulum membrane. It localises to the mitochondrion membrane. It is found in the membrane. Reversibly inhibits the activity of ATP2A2/SERCA2 in cardiac sarcoplasmic reticulum by decreasing the apparent affinity of the ATPase for Ca(2+). Binds preferentially to the ATP-bound E1 conformational form of ATP2A2 which predominates at low Ca(2+) concentrations during the diastolic phase of the cardiac cycle. Inhibits ATP2A2 Ca(2+) affinity by disrupting its allosteric activation by ATP. Modulates the contractility of the heart muscle in response to physiological stimuli via its effects on ATP2A2. Modulates calcium re-uptake during muscle relaxation and plays an important role in calcium homeostasis in the heart muscle. The degree of ATP2A2 inhibition depends on the oligomeric state of PLN. ATP2A2 inhibition is alleviated by PLN phosphorylation. Also inhibits the activity of ATP2A3/SERCA3. Controls intracellular Ca(2+) levels in elongated spermatids and may play a role in germ cell differentiation. In the thalamic reticular nucleus of the brain, plays a role in the regulation of sleep patterns and executive functioning. The chain is Phospholamban from Homo sapiens (Human).